The following is a 269-amino-acid chain: Shikimate dehydrogenase (NADP(+)) (269 aa).

Shikimate contacts are provided by residues 17-19 (SKS) and Thr-64. Residue Lys-68 is the Proton acceptor of the active site. Glu-80 contacts NADP(+). Shikimate-binding residues include Asn-89 and Asp-105. NADP(+)-binding positions include 130 to 134 (GAGGA), 154 to 159 (NRTHAK), and Met-213. Tyr-215 contacts shikimate. Gly-237 serves as a coordination point for NADP(+).

This sequence belongs to the shikimate dehydrogenase family. As to quaternary structure, homodimer.

It carries out the reaction shikimate + NADP(+) = 3-dehydroshikimate + NADPH + H(+). Its pathway is metabolic intermediate biosynthesis; chorismate biosynthesis; chorismate from D-erythrose 4-phosphate and phosphoenolpyruvate: step 4/7. Its function is as follows. Involved in the biosynthesis of the chorismate, which leads to the biosynthesis of aromatic amino acids. Catalyzes the reversible NADPH linked reduction of 3-dehydroshikimate (DHSA) to yield shikimate (SA). In Neisseria pharyngis, this protein is Shikimate dehydrogenase (NADP(+)).